The chain runs to 234 residues: Sugar fermentation stimulation protein homolog (234 aa).

The protein belongs to the SfsA family.

The sequence is that of Sugar fermentation stimulation protein homolog from Shewanella baltica (strain OS195).